The sequence spans 476 residues: Aspartyl/glutamyl-tRNA(Asn/Gln) amidotransferase subunit B (476 aa).

Belongs to the GatB/GatE family. GatB subfamily. Heterotrimer of A, B and C subunits.

The enzyme catalyses L-glutamyl-tRNA(Gln) + L-glutamine + ATP + H2O = L-glutaminyl-tRNA(Gln) + L-glutamate + ADP + phosphate + H(+). It catalyses the reaction L-aspartyl-tRNA(Asn) + L-glutamine + ATP + H2O = L-asparaginyl-tRNA(Asn) + L-glutamate + ADP + phosphate + 2 H(+). Its function is as follows. Allows the formation of correctly charged Asn-tRNA(Asn) or Gln-tRNA(Gln) through the transamidation of misacylated Asp-tRNA(Asn) or Glu-tRNA(Gln) in organisms which lack either or both of asparaginyl-tRNA or glutaminyl-tRNA synthetases. The reaction takes place in the presence of glutamine and ATP through an activated phospho-Asp-tRNA(Asn) or phospho-Glu-tRNA(Gln). The sequence is that of Aspartyl/glutamyl-tRNA(Asn/Gln) amidotransferase subunit B from Listeria innocua serovar 6a (strain ATCC BAA-680 / CLIP 11262).